The sequence spans 116 residues: Insulin (116 aa).

The N-terminal stretch at 1 to 24 is a signal peptide; that stretch reads MAALWLQSFSLLVLLVVSWPGSQA. 3 cysteine pairs are disulfide-bonded: cysteine 32/cysteine 102, cysteine 44/cysteine 115, and cysteine 101/cysteine 106. The propeptide at 56 to 93 is c peptide; that stretch reads DVDQLLGFLPPKSGGAAAAGADNEVAEFAFKDQMEMMV.

It belongs to the insulin family. Heterodimer of a B chain and an A chain linked by two disulfide bonds.

The protein resides in the secreted. Functionally, insulin decreases blood glucose concentration. It increases cell permeability to monosaccharides, amino acids and fatty acids. It accelerates glycolysis, the pentose phosphate cycle, and glycogen synthesis in liver. This chain is Insulin (ins), found in Lophius americanus (American angler).